Here is a 572-residue protein sequence, read N- to C-terminus: Proline--tRNA ligase (572 aa).

This sequence belongs to the class-II aminoacyl-tRNA synthetase family. ProS type 1 subfamily. As to quaternary structure, homodimer.

Its subcellular location is the cytoplasm. It carries out the reaction tRNA(Pro) + L-proline + ATP = L-prolyl-tRNA(Pro) + AMP + diphosphate. Its function is as follows. Catalyzes the attachment of proline to tRNA(Pro) in a two-step reaction: proline is first activated by ATP to form Pro-AMP and then transferred to the acceptor end of tRNA(Pro). As ProRS can inadvertently accommodate and process non-cognate amino acids such as alanine and cysteine, to avoid such errors it has two additional distinct editing activities against alanine. One activity is designated as 'pretransfer' editing and involves the tRNA(Pro)-independent hydrolysis of activated Ala-AMP. The other activity is designated 'posttransfer' editing and involves deacylation of mischarged Ala-tRNA(Pro). The misacylated Cys-tRNA(Pro) is not edited by ProRS. The sequence is that of Proline--tRNA ligase from Psychrobacter arcticus (strain DSM 17307 / VKM B-2377 / 273-4).